Here is a 60-residue protein sequence, read N- to C-terminus: Cytotoxin 8 (60 aa).

4 disulfides stabilise this stretch: cysteine 3/cysteine 21, cysteine 14/cysteine 38, cysteine 42/cysteine 53, and cysteine 54/cysteine 59.

Belongs to the three-finger toxin family. Short-chain subfamily. Type IA cytotoxin sub-subfamily. Monomer in solution; Homodimer and oligomer in the presence of negatively charged lipids forming a pore with a size ranging between 20 and 30 Angstroms. Expressed by the venom gland.

It localises to the secreted. The protein resides in the target cell membrane. Functionally, shows cytolytic activity on many different cells by forming pore in lipid membranes. In vivo, increases heart rate or kills the animal by cardiac arrest. In addition, it binds to heparin with high affinity, interacts with Kv channel-interacting protein 1 (KCNIP1) in a calcium-independent manner, and binds to integrin alpha-V/beta-3 (ITGAV/ITGB3) with moderate affinity. Has hemolytic activity towards human erythrocytes (EC(50)=0.074 uM) and cytolytic activity towards various cell lines. The sequence is that of Cytotoxin 8 from Naja naja (Indian cobra).